The following is a 460-amino-acid chain: Cysteine--tRNA ligase (460 aa).

Residue Cys28 participates in Zn(2+) binding. The 'HIGH' region signature appears at 30–40 (MTVYDYCHLGH). The Zn(2+) site is built by Cys209, His234, and Glu238. The 'KMSKS' region signature appears at 266 to 270 (KMSKS). Lys269 provides a ligand contact to ATP.

This sequence belongs to the class-I aminoacyl-tRNA synthetase family. Monomer. It depends on Zn(2+) as a cofactor.

It localises to the cytoplasm. It carries out the reaction tRNA(Cys) + L-cysteine + ATP = L-cysteinyl-tRNA(Cys) + AMP + diphosphate. The sequence is that of Cysteine--tRNA ligase from Pseudomonas paraeruginosa (strain DSM 24068 / PA7) (Pseudomonas aeruginosa (strain PA7)).